The chain runs to 279 residues: Undecaprenyl-diphosphatase (279 aa).

8 helical membrane passes run 17 to 37 (TEFLPVSSTGHLFLFSYFFPF), 46 to 66 (AFEDLFDIFIQTGAILSVVVL), 92 to 112 (FQFYLNLIVGILPILILGFLL), 123 to 143 (SDLLLILGMSWFVGGIIMVFV), 156 to 176 (IGFKESIIVGFLQCFALIPGV), 197 to 217 (AEFSFFLAIPVLTLAGIYKLY), 226 to 246 (ETIGLLLFGSIISFIICYFII), and 257 to 277 (SFISFGVYRILLGLLVILYFV).

This sequence belongs to the UppP family.

The protein localises to the cell inner membrane. The enzyme catalyses di-trans,octa-cis-undecaprenyl diphosphate + H2O = di-trans,octa-cis-undecaprenyl phosphate + phosphate + H(+). In terms of biological role, catalyzes the dephosphorylation of undecaprenyl diphosphate (UPP). Confers resistance to bacitracin. The sequence is that of Undecaprenyl-diphosphatase from Leptospira biflexa serovar Patoc (strain Patoc 1 / ATCC 23582 / Paris).